Here is a 309-residue protein sequence, read N- to C-terminus: Low-density lipoprotein receptor-related protein 1 (309 aa).

This sequence belongs to the LDLR family.

The protein resides in the endoplasmic reticulum. The protein localises to the golgi apparatus. Its subcellular location is the endosome. Involved in endocytosis, fatty acid beta-oxidation and infectious growth. Plays a critical role in the accumulation of MSN2 from the cytosol to the nucleus by activating the cyclic AMP signaling pathway. MSN2 can then target the dienoyl-coenzyme A isomerase DCI1 and other genes involved in fatty acid beta-oxidation, which is important for lipid droplets degradation and infectious growth. The chain is Low-density lipoprotein receptor-related protein 1 from Pyricularia oryzae (strain 70-15 / ATCC MYA-4617 / FGSC 8958) (Rice blast fungus).